A 689-amino-acid polypeptide reads, in one-letter code: MLRTSIASSRQVLSSPICPNPSVQWLHTSRARRVNAAASRRYYAVARKPNAGVRSSSTPNAAATPELSQKATNSTSTKPPGPNDPDVRSPASPSTGSTLHPETVSKPPQSPAVQGQTSPGSSVQPPEHEPSPPPPRPPPAPKTGLLRKLLYLFLTTGLAYAGGVWYSLRSDNFYDFFTEYIPYGEEAVLYLEERDFRSRFPSIARQINRRVSAPRDEGAQVMIPGRSGLSWKVAEEQQEASDVTKQGQHISATDANELTEETKVAEKAKEDVKSKPVAKKAEAAEPKSSPKVVEPHPAKAEENTSLEAPRQPVVPAAAAIEHLGLDNEDEPVVQDLVKVFNDIITVISADESASKFSVPIAKAKEELEKIGDRIVALKNDAQESAKEEIRNAQAALDKSAAELVRHINEVRAQDAAEFREEFESEREKISKSYQEKVTTELQRAHEVAEQRLRNELVEQAIELNRKFLADVKTLVENEREGRLSKLAELTANVAELERLTAGWSDVIDINLRTQQLQVAVDSVRTTLENSEVPRPFIRELAAVKELASNDEVVAAAIASISPTAYQRGIPSPAQLVDRFRRVASEVRKASLLPENAGITSHAASLVLSKVMLKKQGTPVGNDVESILTRTENLLEEGNFDEAAREMNSLQGWAKLLSKDWLADVRRVLEVKQALEVIETEARLRCLQVE.

Residues Met-1–Ser-55 constitute a mitochondrion transit peptide. Positions Pro-49–Lys-142 are disordered. 3 stretches are compositionally biased toward polar residues: residues Val-53–Lys-78, Ala-91–His-100, and Pro-111–Gln-124. Residues Ser-56–Lys-148 lie on the Mitochondrial matrix side of the membrane. The span at Ser-131–Pro-141 shows a compositional bias: pro residues. The helical transmembrane segment at Leu-149–Leu-168 threads the bilayer. Residues Arg-169–Glu-689 lie on the Mitochondrial intermembrane side of the membrane. Residues Ala-234–Ala-308 are disordered. Positions Ala-240–Asn-256 are enriched in polar residues. 2 stretches are compositionally biased toward basic and acidic residues: residues Glu-260 to Glu-285 and Val-293 to Glu-302. The stretch at Ile-360–Asp-505 forms a coiled coil.

This sequence belongs to the MICOS complex subunit Mic60 family. In terms of assembly, component of the mitochondrial contact site and cristae organizing system (MICOS) complex.

The protein resides in the mitochondrion inner membrane. Its function is as follows. Component of the MICOS complex, a large protein complex of the mitochondrial inner membrane that plays crucial roles in the maintenance of crista junctions, inner membrane architecture, and formation of contact sites to the outer membrane. Plays a role in keeping cristae membranes connected to the inner boundary membrane. Also promotes protein import via the mitochondrial intermembrane space assembly (MIA) pathway. The protein is MICOS complex subunit MIC60 (MIC60) of Ajellomyces dermatitidis (strain ER-3 / ATCC MYA-2586) (Blastomyces dermatitidis).